Reading from the N-terminus, the 541-residue chain is Membrane protein insertase YidC (541 aa).

The next 5 helical transmembrane spans lie at 7–27 (LLFMALLFISFLIYQQWQVDY), 345–365 (LVQNWGLAIIGVTLVVKAVLY), 415–435 (LGGCLPILLQMPIFIALYWTF), 453–473 (LSAQDPYFILPILMGASMFLL), and 492–512 (FMPLIFMVFFLFFPAGLVLYW).

Belongs to the OXA1/ALB3/YidC family. Type 1 subfamily. Interacts with the Sec translocase complex via SecD. Specifically interacts with transmembrane segments of nascent integral membrane proteins during membrane integration.

The protein localises to the cell inner membrane. Its function is as follows. Required for the insertion and/or proper folding and/or complex formation of integral membrane proteins into the membrane. Involved in integration of membrane proteins that insert both dependently and independently of the Sec translocase complex, as well as at least some lipoproteins. Aids folding of multispanning membrane proteins. This is Membrane protein insertase YidC from Histophilus somni (strain 2336) (Haemophilus somnus).